The primary structure comprises 60 residues: UPF0434 protein KPN78578_09190 (60 aa).

It belongs to the UPF0434 family.

In Klebsiella pneumoniae subsp. pneumoniae (strain ATCC 700721 / MGH 78578), this protein is UPF0434 protein KPN78578_09190.